The chain runs to 230 residues: Enolase-phosphatase E1 (230 aa).

The protein belongs to the HAD-like hydrolase superfamily. MasA/MtnC family. As to quaternary structure, monomer. Requires Mg(2+) as cofactor.

It carries out the reaction 5-methylsulfanyl-2,3-dioxopentyl phosphate + H2O = 1,2-dihydroxy-5-(methylsulfanyl)pent-1-en-3-one + phosphate. It participates in amino-acid biosynthesis; L-methionine biosynthesis via salvage pathway; L-methionine from S-methyl-5-thio-alpha-D-ribose 1-phosphate: step 3/6. Its pathway is amino-acid biosynthesis; L-methionine biosynthesis via salvage pathway; L-methionine from S-methyl-5-thio-alpha-D-ribose 1-phosphate: step 4/6. Bifunctional enzyme that catalyzes the enolization of 2,3-diketo-5-methylthiopentyl-1-phosphate (DK-MTP-1-P) into the intermediate 2-hydroxy-3-keto-5-methylthiopentenyl-1-phosphate (HK-MTPenyl-1-P), which is then dephosphorylated to form the acireductone 1,2-dihydroxy-3-keto-5-methylthiopentene (DHK-MTPene). The chain is Enolase-phosphatase E1 from Sulfurihydrogenibium sp. (strain YO3AOP1).